Consider the following 393-residue polypeptide: MSFLANEASSESIASFSKPEIMSSFLPEGGCYELLSVIGKGFEDLMTVNSRYKPTGEYVTVRRINLEACSNEMVTFLQGELHVSKLFSHPNIVPYRATFIADNELWAVTSFMAYGSAKDLIGTHFMDGMSELAIAYILQGVLKALDYIHHMGYVHRSVKASHILISTDGKVYLSGLRSNLSMISHGQRQRAVHDFPKYSIKVLPWLSPEVLQQNLQGYDAKSDIYSVGITACELANGHVPFKDMPATQMLLEKLNGTVPCLLDTSTIPAEELTMSPSRSIANPGLNDSLAAGSLRPANGDSPSHPYHRTFSPHFHNFVEQCLQRNPDARPNASTLLNHSFFKQIKRRASEALPELLRPVTPITSFEGSQSQDHSGILGLVTNLEDLEVDDWEF.

2 positions are modified to phosphoserine: serine 2 and serine 9. The Protein kinase domain occupies 32-341 (YELLSVIGKG…ASTLLNHSFF (310 aa)). Threonine 381 is modified (phosphothreonine; by LKB1).

The protein belongs to the protein kinase superfamily. STE Ser/Thr protein kinase family. STE20 subfamily. In terms of assembly, component of a trimeric complex composed of STK11/LKB1, STRAD (STRADA or STRADB) and CAB39/MO25 (CAB39/MO25alpha or CAB39L/MO25beta): the complex tethers STK11/LKB1 in the cytoplasm and stimulates its catalytic activity. In terms of tissue distribution, expressed in liver.

The protein localises to the nucleus. It localises to the cytoplasm. Its function is as follows. Pseudokinase which, in complex with CAB39/MO25 (CAB39/MO25alpha or CAB39L/MO25beta), binds to and activates STK11/LKB1. Adopts a closed conformation typical of active protein kinases and binds STK11/LKB1 as a pseudosubstrate, promoting conformational change of STK11/LKB1 in an active conformation. The sequence is that of STE20-related kinase adapter protein alpha (Strada) from Rattus norvegicus (Rat).